Reading from the N-terminus, the 66-residue chain is MKRKDTLKDYRGKSIDQLQEVKIELLQQLFSLRMQKGTGQLKKNHLFKSAKRDIARINTIISEKNK.

The protein belongs to the universal ribosomal protein uL29 family.

This chain is Large ribosomal subunit protein uL29, found in Francisella tularensis subsp. holarctica (strain LVS).